The chain runs to 257 residues: Type III pantothenate kinase (257 aa).

Residue 7 to 14 (DIGNSHTV) participates in ATP binding. 106–109 (GTDR) contacts substrate. Residue Asp108 is the Proton acceptor of the active site. Residue Asp128 coordinates K(+). Thr132 lines the ATP pocket. Residue Thr184 coordinates substrate.

It belongs to the type III pantothenate kinase family. As to quaternary structure, homodimer. NH4(+) is required as a cofactor. The cofactor is K(+).

The protein resides in the cytoplasm. It carries out the reaction (R)-pantothenate + ATP = (R)-4'-phosphopantothenate + ADP + H(+). It participates in cofactor biosynthesis; coenzyme A biosynthesis; CoA from (R)-pantothenate: step 1/5. Its function is as follows. Catalyzes the phosphorylation of pantothenate (Pan), the first step in CoA biosynthesis. This is Type III pantothenate kinase from Nocardioides sp. (strain ATCC BAA-499 / JS614).